The sequence spans 204 residues: CLAVATA3/ESR (CLE)-related protein 1 (204 aa).

The N-terminal stretch at 1–21 is a signal peptide; sequence MAKNAMLCLLILSVVLALAFA. The tract at residues 21-83 is required for secretion from the host cytoplasm to the host apoplasm; that stretch reads ATNEKDDKEA…SNQLQNAYRM (63 aa). N-linked (GlcNAc...) asparagine glycosylation occurs at Asn-32. The tract at residues 116 to 204 is disordered; that stretch reads RNTGMKPQSY…TPGVPDRQHR (89 aa). 3 stretches are compositionally biased toward basic and acidic residues: residues 139-151, 160-172, and 181-193; these read LHNR…EQKR. 3 consecutive propeptides (removed in mature form) follow at residues 142–150, 163–171, and 184–192; these read REKILEEQK and REKTLEEQK.

The protein belongs to the CLV3/ESR signal peptide family. In terms of processing, preprocessing of the precursor by host proteases leads first to the production of 21-mer CLE-containing peptides (Arg-130 to Lys-150, Arg-151 to Lys-171 and Arg-172 to Lys-192) followed by an ultimate C-term trimming to give the mature 12-mer CLE1-1 peptide. Highly expressed exclusively within the dorsal esophageal gland cell during syncytium formation in host plants.

The protein resides in the secreted. It is found in the host cytoplasm. It localises to the host extracellular space. Its subcellular location is the extracellular space. The protein localises to the apoplast. Mimics host plant CLE extracellular signal peptides that regulate cell fate. May play a role in the differentiation or division of feeding cells (syncytia) induced in plant roots during infection. The chain is CLAVATA3/ESR (CLE)-related protein 1 from Globodera rostochiensis (Golden nematode worm).